A 243-amino-acid chain; its full sequence is Uridylate kinase (243 aa).

15 to 18 (KLSG) provides a ligand contact to ATP. Position 56 (Gly-56) interacts with UMP. Positions 57 and 61 each coordinate ATP. 138–145 (TGNPYFST) lines the UMP pocket. Residues Asn-166, Tyr-172, and Asp-175 each contribute to the ATP site.

Belongs to the UMP kinase family. Homohexamer.

Its subcellular location is the cytoplasm. It catalyses the reaction UMP + ATP = UDP + ADP. Its pathway is pyrimidine metabolism; CTP biosynthesis via de novo pathway; UDP from UMP (UMPK route): step 1/1. Inhibited by UTP. Catalyzes the reversible phosphorylation of UMP to UDP. This Mycoplasma genitalium (strain ATCC 33530 / DSM 19775 / NCTC 10195 / G37) (Mycoplasmoides genitalium) protein is Uridylate kinase.